The chain runs to 81 residues: Polcalcin Syr v 3 (81 aa).

EF-hand domains lie at 3–38 and 41–73; these read EEVA…LGSV and EEIQ…NSGL. Positions 16, 18, 20, 22, 27, 51, 53, 55, and 62 each coordinate Ca(2+).

In Syringa vulgaris (Common lilac), this protein is Polcalcin Syr v 3 (SYRV3).